We begin with the raw amino-acid sequence, 194 residues long: FMN-dependent NADH:quinone oxidoreductase (194 aa).

Residues Ser-9, 15–17 (SIS), and 85–88 (MYNF) contribute to the FMN site.

The protein belongs to the azoreductase type 1 family. In terms of assembly, homodimer. Requires FMN as cofactor.

It carries out the reaction 2 a quinone + NADH + H(+) = 2 a 1,4-benzosemiquinone + NAD(+). It catalyses the reaction N,N-dimethyl-1,4-phenylenediamine + anthranilate + 2 NAD(+) = 2-(4-dimethylaminophenyl)diazenylbenzoate + 2 NADH + 2 H(+). Quinone reductase that provides resistance to thiol-specific stress caused by electrophilic quinones. Its function is as follows. Also exhibits azoreductase activity. Catalyzes the reductive cleavage of the azo bond in aromatic azo compounds to the corresponding amines. The sequence is that of FMN-dependent NADH:quinone oxidoreductase from Xanthomonas oryzae pv. oryzae (strain KACC10331 / KXO85).